A 192-amino-acid chain; its full sequence is Aminodeoxychorismate synthase component 2 (192 aa).

Positions 3 to 192 (SVLMIDNCDS…LANLIHRPCH (190 aa)) constitute a Glutamine amidotransferase type-1 domain. Catalysis depends on residues C83, H170, and E172.

Monomer. Heterodimer consisting of two non-identical subunits: a glutamine amidotransferase subunit (PabA) and a aminodeoxychorismate synthase subunit (PabB).

The enzyme catalyses chorismate + L-glutamine = 4-amino-4-deoxychorismate + L-glutamate. It participates in cofactor biosynthesis; tetrahydrofolate biosynthesis; 4-aminobenzoate from chorismate: step 1/2. In terms of biological role, part of a heterodimeric complex that catalyzes the two-step biosynthesis of 4-amino-4-deoxychorismate (ADC), a precursor of p-aminobenzoate (PABA) and tetrahydrofolate. In the first step, a glutamine amidotransferase (PabA) generates ammonia as a substrate that, along with chorismate, is used in the second step, catalyzed by aminodeoxychorismate synthase (PabB) to produce ADC. PabA converts glutamine into glutamate only in the presence of stoichiometric amounts of PabB. This chain is Aminodeoxychorismate synthase component 2, found in Streptomyces lividans.